The sequence spans 274 residues: 2,3,4,5-tetrahydropyridine-2,6-dicarboxylate N-succinyltransferase (274 aa).

The protein belongs to the transferase hexapeptide repeat family.

It localises to the cytoplasm. The enzyme catalyses (S)-2,3,4,5-tetrahydrodipicolinate + succinyl-CoA + H2O = (S)-2-succinylamino-6-oxoheptanedioate + CoA. It functions in the pathway amino-acid biosynthesis; L-lysine biosynthesis via DAP pathway; LL-2,6-diaminopimelate from (S)-tetrahydrodipicolinate (succinylase route): step 1/3. The sequence is that of 2,3,4,5-tetrahydropyridine-2,6-dicarboxylate N-succinyltransferase from Klebsiella pneumoniae (strain 342).